The sequence spans 88 residues: Sec-independent protein translocase protein TatA (88 aa).

The helical transmembrane segment at 1–21 (MGSLSPWHWVVLVVVVVLLFG) threads the bilayer. Over residues 49 to 71 (ENQAQASALETPMQNPTVVQSQR) the composition is skewed to polar residues. Residues 49–88 (ENQAQASALETPMQNPTVVQSQRVVPPWSTEQDHTEARPA) form a disordered region. A compositionally biased stretch (basic and acidic residues) spans 79 to 88 (EQDHTEARPA).

This sequence belongs to the TatA/E family. In terms of assembly, the Tat system comprises two distinct complexes: a TatABC complex, containing multiple copies of TatA, TatB and TatC subunits, and a separate TatA complex, containing only TatA subunits. Substrates initially bind to the TatABC complex, which probably triggers association of the separate TatA complex to form the active translocon.

The protein resides in the cell membrane. Functionally, part of the twin-arginine translocation (Tat) system that transports large folded proteins containing a characteristic twin-arginine motif in their signal peptide across membranes. TatA could form the protein-conducting channel of the Tat system. The chain is Sec-independent protein translocase protein TatA from Mycobacterium leprae (strain TN).